Consider the following 323-residue polypeptide: Germacrene A synthase (323 aa).

The Mg(2+) site is built by Asp82, Asp86, Asn222, Ser226, and Glu230. The DDXXD motif motif lies at 82 to 86 (DDQCD).

It belongs to the terpene synthase family. Mg(2+) is required as a cofactor.

It catalyses the reaction (2E,6E)-farnesyl diphosphate = 5-epi-alpha-selinene + diphosphate. Its function is as follows. Catalyzes the cyclization of farnesyl diphosphate (FPP) to the sesquiterpene germacrene A. This chain is Germacrene A synthase, found in Nostoc punctiforme (strain ATCC 29133 / PCC 73102).